A 429-amino-acid polypeptide reads, in one-letter code: D-amino acid dehydrogenase (429 aa).

3–17 (VLILGSGVIGVTSAW) provides a ligand contact to FAD.

Belongs to the DadA oxidoreductase family. It depends on FAD as a cofactor.

It catalyses the reaction a D-alpha-amino acid + A + H2O = a 2-oxocarboxylate + AH2 + NH4(+). In terms of biological role, oxidative deamination of D-amino acids. In Xanthomonas axonopodis pv. citri (strain 306), this protein is D-amino acid dehydrogenase.